The following is a 237-amino-acid chain: Ribonuclease PH (237 aa).

Residues R86 and 124 to 126 (GTR) each bind phosphate.

This sequence belongs to the RNase PH family. Homohexameric ring arranged as a trimer of dimers.

The catalysed reaction is tRNA(n+1) + phosphate = tRNA(n) + a ribonucleoside 5'-diphosphate. In terms of biological role, phosphorolytic 3'-5' exoribonuclease that plays an important role in tRNA 3'-end maturation. Removes nucleotide residues following the 3'-CCA terminus of tRNAs; can also add nucleotides to the ends of RNA molecules by using nucleoside diphosphates as substrates, but this may not be physiologically important. Probably plays a role in initiation of 16S rRNA degradation (leading to ribosome degradation) during starvation. In Coxiella burnetii (strain RSA 331 / Henzerling II), this protein is Ribonuclease PH.